A 602-amino-acid chain; its full sequence is MSTPLDHIRNFSIVAHIDHGKSTLADRLIQLTGGLDTREMKDQVLDSMDIERERGITIKAQTVRLSYKAKNGEDYVLNLIDTPGHVDFAYEVSRSLAACEGSLLVVDASQGVEAQTLANVYQAIDNNHEIVVVLNKIDLPAAEPERVKQQIEEVIGIDAAQAVHISAKTGIGIEDVLEAIVTQLPAPKEGDRNAPLKAMLVDSWYDSYLGVIVLVRIIDGVLKKGQTIRMMGTGAKYPVERTGVFTPKMVQVDELGPGELGFITASIKEVADTRVGDTITEDRRPTNKMLSGFKPAQPVVFCGLFPVDAADFEDLRAAMGKLRLNDASFSFEMETSAALGFGFRCGFLGLLHLEIIQERLEREFNLDLITTAPSVVYRLNMQDGSQKELHNPADMPDVVKINAIEEPWIRATIMTPDDYLGAIMKLCQERRGLQIDLTYVGPRAMITYDLPLNEVVFDFYDRLKSISKGYASFDYNLSDYREGDLVKMSILVNEEPVDALSMLVHRSAAEKRGRALCEKLKELIPQHMFKIPIQAAIGGRIVARETISALRKDVTAKCYGGDVTRKRKLLEKQKEGKKRMRQFGKVEIPQEAFIQALKMGDD.

Residues 6 to 188 enclose the tr-type G domain; it reads DHIRNFSIVA…AIVTQLPAPK (183 aa). GTP-binding positions include 18 to 23 and 135 to 138; these read DHGKST and NKID.

It belongs to the TRAFAC class translation factor GTPase superfamily. Classic translation factor GTPase family. LepA subfamily.

The protein resides in the cell inner membrane. It carries out the reaction GTP + H2O = GDP + phosphate + H(+). Its function is as follows. Required for accurate and efficient protein synthesis under certain stress conditions. May act as a fidelity factor of the translation reaction, by catalyzing a one-codon backward translocation of tRNAs on improperly translocated ribosomes. Back-translocation proceeds from a post-translocation (POST) complex to a pre-translocation (PRE) complex, thus giving elongation factor G a second chance to translocate the tRNAs correctly. Binds to ribosomes in a GTP-dependent manner. The chain is Elongation factor 4 from Brucella anthropi (strain ATCC 49188 / DSM 6882 / CCUG 24695 / JCM 21032 / LMG 3331 / NBRC 15819 / NCTC 12168 / Alc 37) (Ochrobactrum anthropi).